We begin with the raw amino-acid sequence, 572 residues long: NADH-ubiquinone oxidoreductase chain 5 (572 aa).

Transmembrane regions (helical) follow at residues 4–24 (ISFVNLISMSLSCFLLSLYFL), 44–64 (IVMTFLFDWMSLLFMSFVLMI), 86–106 (IMLVLMFVLSMMLLIISPNLI), 107–127 (SILLGWDGLGLVSYCLVIYFQ), 147–167 (VALLLSIAWMLNYGSWNYIFY), 170–190 (IMQNEFEMLMIGSLVMLAAMT), 217–237 (SSTLVTAGVYLLIRFNIILST), 239–259 (WLGQLMLLLSGLTMFMAGLGA), 268–288 (IIALSTLSQLGLMMSILSMGF), 294–314 (FHLLTHALFKALLFMCAGAII), 337–357 (SACFNVSNLALCGMPFLAGFY), 372–394 (NMFSFFLYYFSTGLTVSYSFRLV), 422–442 (MGLLIMSIIGGSMLNWLIFPF), 457–477 (LFVCIVGGLFGYLISLSNLFF), 490–510 (FLGSMWFMPYISTYGMIFYPL), and 552–572 (LKIYLLLFVFWILILLILLFL).

This sequence belongs to the complex I subunit 5 family.

It localises to the mitochondrion inner membrane. It carries out the reaction a ubiquinone + NADH + 5 H(+)(in) = a ubiquinol + NAD(+) + 4 H(+)(out). Its function is as follows. Core subunit of the mitochondrial membrane respiratory chain NADH dehydrogenase (Complex I) that is believed to belong to the minimal assembly required for catalysis. Complex I functions in the transfer of electrons from NADH to the respiratory chain. The immediate electron acceptor for the enzyme is believed to be ubiquinone. In Drosophila melanogaster (Fruit fly), this protein is NADH-ubiquinone oxidoreductase chain 5 (mt:ND5).